Consider the following 146-residue polypeptide: Hemoglobin subunit beta (146 aa).

N-acetylvaline is present on Val-1. Residues 2 to 146 enclose the Globin domain; sequence HLTGEEKSAV…VANALAHKYH (145 aa). At Thr-12 the chain carries Phosphothreonine. Ser-44 bears the Phosphoserine mark. Lys-59 carries the N6-acetyllysine modification. His-63 serves as a coordination point for heme b. Lys-82 carries the post-translational modification N6-acetyllysine. Position 92 (His-92) interacts with heme b. Cys-93 carries the S-nitrosocysteine modification. Position 144 is an N6-acetyllysine (Lys-144).

This sequence belongs to the globin family. Heterotetramer of two alpha chains and two beta chains. In terms of tissue distribution, red blood cells.

Functionally, involved in oxygen transport from the lung to the various peripheral tissues. This chain is Hemoglobin subunit beta (HBB), found in Loris tardigradus (Slender loris).